Reading from the N-terminus, the 706-residue chain is 1,4-alpha-glucan-branching enzyme (706 aa).

(1,4-alpha-D-glucosyl)n-binding residues include tryptophan 96 and lysine 133. Aspartate 358 acts as the Nucleophile in catalysis. Residue glutamate 419 is the Proton donor of the active site.

The protein belongs to the glycosyl hydrolase 13 family. GlgB subfamily. Monomer.

The protein localises to the cytoplasm. It carries out the reaction Transfers a segment of a (1-&gt;4)-alpha-D-glucan chain to a primary hydroxy group in a similar glucan chain.. The protein operates within glycan biosynthesis; glycogen biosynthesis. In terms of biological role, glycogen-branching enzyme participates in the glycogen biosynthetic process along with glycogenin and glycogen synthase. Generates alpha-1,6-glucosidic branches from alpha-1,4-linked glucose chains, to increase solubility of the glycogen polymer. The protein is 1,4-alpha-glucan-branching enzyme (GLC3) of Candida glabrata (strain ATCC 2001 / BCRC 20586 / JCM 3761 / NBRC 0622 / NRRL Y-65 / CBS 138) (Yeast).